Reading from the N-terminus, the 700-residue chain is Methionine--tRNA ligase (700 aa).

Positions proline 13 to histidine 23 match the 'HIGH' region motif. Zn(2+)-binding residues include cysteine 144, cysteine 147, cysteine 157, and cysteine 160. A 'KMSKS' region motif is present at residues lysine 341–serine 345. Position 344 (lysine 344) interacts with ATP. The tract at residues glutamine 562–serine 587 is disordered. Positions lysine 577 to serine 587 are enriched in polar residues. One can recognise a tRNA-binding domain in the interval aspartate 598–alanine 700.

The protein belongs to the class-I aminoacyl-tRNA synthetase family. MetG type 1 subfamily. As to quaternary structure, homodimer. Zn(2+) serves as cofactor.

Its subcellular location is the cytoplasm. The enzyme catalyses tRNA(Met) + L-methionine + ATP = L-methionyl-tRNA(Met) + AMP + diphosphate. In terms of biological role, is required not only for elongation of protein synthesis but also for the initiation of all mRNA translation through initiator tRNA(fMet) aminoacylation. The sequence is that of Methionine--tRNA ligase from Psychrobacter cryohalolentis (strain ATCC BAA-1226 / DSM 17306 / VKM B-2378 / K5).